The sequence spans 282 residues: uncharacterized protein (282 aa).

A coiled-coil region spans residues L205 to A277.

This is an uncharacterized protein from Treponema pallidum (strain Nichols).